A 406-amino-acid chain; its full sequence is Peptidyl-alpha-hydroxyglycine alpha-amidating lyase 2 (406 aa).

Residues 1-19 form the signal peptide; that stretch reads MSRLLFVALLAISLGYVAS. NHL repeat units follow at residues 168–209, 218–261, 264–308, and 358–402; these read GAIK…FKPF, GKRF…FNAA, LLRT…PKAG, and DPRS…RVWK. Intrachain disulfides connect Cys-231–Cys-251 and Cys-293–Cys-304.

The protein belongs to the peptidyl-alpha-hydroxyglycine alpha-amidating lyase family. It depends on Zn(2+) as a cofactor. Post-translationally, N-glycosylated. In terms of tissue distribution, only found in a subset of neurons distributed throughout all levels of the central nervous system (CNS). Present in at least some neuroendocrine cells. In adult brains, it is only present in a small handful of cells, the majority of which being distributed in distal parts of the medulla, with a higher expression in the posterior surface of the brain (at protein level).

Its subcellular location is the secreted. It carries out the reaction a [peptide]-C-terminal (2S)-2-hydroxyglycine = a [peptide]-C-terminal amide + glyoxylate. In terms of biological role, peptidyl-alpha-hydroxylglycine alpha-amidating lyase that catalyzes an essential reaction in C-terminal alpha-amidation of peptides. Mediates the dismutation of the unstable peptidyl(2-hydroxyglycine) intermediate to glyoxylate and the corresponding desglycine peptide amide. C-terminal amidation of peptides such as neuropeptides is essential for full biological activity. The sequence is that of Peptidyl-alpha-hydroxyglycine alpha-amidating lyase 2 (Pal2) from Drosophila melanogaster (Fruit fly).